Here is a 329-residue protein sequence, read N- to C-terminus: Serpentine receptor class alpha-8 (329 aa).

6 consecutive transmembrane segments (helical) span residues 26–46 (VDLI…KMVL), 60–80 (FLNI…VVVI), 141–161 (IFVG…TGKL), 187–207 (TIHF…SVAL), 231–251 (VIES…FMFI), and 273–293 (FWVV…LLLI).

It belongs to the nematode receptor-like protein sra family.

It localises to the membrane. The chain is Serpentine receptor class alpha-8 (sra-8) from Caenorhabditis elegans.